The following is a 227-amino-acid chain: uncharacterized protein (227 aa).

The N-terminal stretch at 1-23 (MKKLTVTFLTFISIFFAATAAFA) is a signal peptide.

This is an uncharacterized protein from Coxiella burnetii (strain RSA 493 / Nine Mile phase I).